A 104-amino-acid chain; its full sequence is Ig lambda-3 chain C region (104 aa).

An Ig-like domain is found at 6–99 (PTLTMFPPSP…EGDTVEKSLS (94 aa)). Residues C27 and C85 are joined by a disulfide bond.

The chain is Ig lambda-3 chain C region (Iglc3) from Mus musculus (Mouse).